The sequence spans 329 residues: Peroxidase 73 (329 aa).

Positions 1-25 (MARFSLVVVVTLSLAISMFPDTTTA) are cleaved as a signal peptide. 4 disulfides stabilise this stretch: cysteine 36–cysteine 119, cysteine 69–cysteine 74, cysteine 125–cysteine 325, and cysteine 204–cysteine 236. Histidine 67 serves as the catalytic Proton acceptor. Ca(2+)-binding residues include aspartate 68, valine 71, glycine 73, aspartate 75, and serine 77. Position 167 (proline 167) interacts with substrate. Position 197 (histidine 197) interacts with heme b. Threonine 198 provides a ligand contact to Ca(2+). The N-linked (GlcNAc...) asparagine glycan is linked to asparagine 215. Residues aspartate 249, threonine 252, and aspartate 257 each contribute to the Ca(2+) site.

It belongs to the peroxidase family. Classical plant (class III) peroxidase subfamily. Heme b is required as a cofactor. Requires Ca(2+) as cofactor. As to expression, expressed in the whole plant, with the highest expression in roots.

It localises to the secreted. The enzyme catalyses 2 a phenolic donor + H2O2 = 2 a phenolic radical donor + 2 H2O. Its function is as follows. Removal of H(2)O(2), oxidation of toxic reductants, biosynthesis and degradation of lignin, suberization, auxin catabolism, response to environmental stresses such as wounding, pathogen attack and oxidative stress. These functions might be dependent on each isozyme/isoform in each plant tissue. The polypeptide is Peroxidase 73 (PER73) (Arabidopsis thaliana (Mouse-ear cress)).